The following is a 406-amino-acid chain: Tryptophan synthase beta chain (406 aa).

Lysine 99 bears the N6-(pyridoxal phosphate)lysine mark.

Belongs to the TrpB family. Tetramer of two alpha and two beta chains. Pyridoxal 5'-phosphate serves as cofactor.

The catalysed reaction is (1S,2R)-1-C-(indol-3-yl)glycerol 3-phosphate + L-serine = D-glyceraldehyde 3-phosphate + L-tryptophan + H2O. Its pathway is amino-acid biosynthesis; L-tryptophan biosynthesis; L-tryptophan from chorismate: step 5/5. Functionally, the beta subunit is responsible for the synthesis of L-tryptophan from indole and L-serine. The polypeptide is Tryptophan synthase beta chain (Methylobacterium sp. (strain 4-46)).